Here is an 89-residue protein sequence, read N- to C-terminus: Small ribosomal subunit protein uS15 (89 aa).

The protein belongs to the universal ribosomal protein uS15 family. In terms of assembly, part of the 30S ribosomal subunit. Forms a bridge to the 50S subunit in the 70S ribosome, contacting the 23S rRNA.

In terms of biological role, one of the primary rRNA binding proteins, it binds directly to 16S rRNA where it helps nucleate assembly of the platform of the 30S subunit by binding and bridging several RNA helices of the 16S rRNA. Forms an intersubunit bridge (bridge B4) with the 23S rRNA of the 50S subunit in the ribosome. The sequence is that of Small ribosomal subunit protein uS15 from Shewanella sediminis (strain HAW-EB3).